Reading from the N-terminus, the 610-residue chain is Solute carrier family 23 member 3 (610 aa).

A compositionally biased stretch (polar residues) spans 1 to 16 (MSRSPLNPSQLRSVGS). Residues 1-32 (MSRSPLNPSQLRSVGSQDALAPLPPPAPQNPS) form a disordered region. Topologically, residues 1–49 (MSRSPLNPSQLRSVGSQDALAPLPPPAPQNPSTHSWDPLCGSLPWGLSC) are cytoplasmic. The helical transmembrane segment at 50–70 (LLALQHVLVMASLLCVSHLLL) threads the bilayer. Residues 71–85 (LCSLSPGGLSYSPSQ) lie on the Extracellular side of the membrane. A helical membrane pass occupies residues 86–106 (LLASSFFSCGMSTILQTWMGS). Over 107 to 164 (RLPLVQAPSLEFLIPALVLTSQKLPRAIQTPGNSSLMLHLCRGPSCHGLGHWNTSLQE) the chain is Cytoplasmic. A helical transmembrane segment spans residues 165–185 (VSGAVVVSGLLQGMMGLLGSP). At 186–187 (GH) the chain is on the extracellular side. Residues 188 to 208 (VFPHCGPLVLAPSLVVAGLSA) traverse the membrane as a helical segment. Residues 209-211 (HRE) are Cytoplasmic-facing. A helical transmembrane segment spans residues 212–232 (VAQFCFTHWGLALLVILLMVV). Over 233–266 (CSQHLGSCQFHVCPWRRASTSSTHTPLPVFRLLS) the chain is Extracellular. A helical transmembrane segment spans residues 267 to 287 (VLIPVACVWIVSAFVGFSVIP). Residues 288–316 (QELSAPTKAPWIWLPHPGEWNWPLLTPRA) are Cytoplasmic-facing. Residues 317-337 (LAAGISMALAASTSSLGCYAL) traverse the membrane as a helical segment. Over 338 to 355 (CGRLLHLPPPPPHACSRG) the chain is Extracellular. A helical transmembrane segment spans residues 356 to 376 (LSLEGLGSVLAGLLGSPMGTA). Over 377–394 (SSFPNVGKVGLIQAGSQQ) the chain is Cytoplasmic. A helical transmembrane segment spans residues 395–414 (VAHLVGLLCVGLGLSPRLAQ). At 415–423 (LLTTIPLPV) the chain is on the extracellular side. Residues 424–446 (VGGVLGVTQAVVLSAGFSSFYLA) form a helical membrane-spanning segment. Over 447–452 (DIDSGR) the chain is Cytoplasmic. Residues 453 to 472 (NIFIVGFSIFMALLLPRWFR) traverse the membrane as a helical segment. The Extracellular segment spans residues 473-486 (EAPVLFSTGWSPLD). Residues 487–507 (VLLHSLLTQPIFLAGLSGFLL) traverse the membrane as a helical segment. The Cytoplasmic portion of the chain corresponds to 508–610 (ENTIPGTQLE…SSREGFRSQK (103 aa)). Residues 571–610 (PEDPGDEEGGSSEPEEMADLLPGSGEPCPESSREGFRSQK) are disordered. The span at 573-588 (DPGDEEGGSSEPEEMA) shows a compositional bias: acidic residues. The span at 601 to 610 (SSREGFRSQK) shows a compositional bias: basic and acidic residues.

It belongs to the nucleobase:cation symporter-2 (NCS2) (TC 2.A.40) family.

It localises to the membrane. The catalysed reaction is hypoxanthine(out) + Na(+)(out) = hypoxanthine(in) + Na(+)(in). In terms of biological role, acts as a sodium-dependent hypoxanthine transporter. May show xanthine-hypoxanthine exchange activity. The polypeptide is Solute carrier family 23 member 3 (SLC23A3) (Homo sapiens (Human)).